Consider the following 139-residue polypeptide: Holo-[acyl-carrier-protein] synthase (139 aa).

Mg(2+)-binding residues include Asp8 and Glu57.

The protein belongs to the P-Pant transferase superfamily. AcpS family. Requires Mg(2+) as cofactor.

It localises to the cytoplasm. The enzyme catalyses apo-[ACP] + CoA = holo-[ACP] + adenosine 3',5'-bisphosphate + H(+). Its function is as follows. Transfers the 4'-phosphopantetheine moiety from coenzyme A to a Ser of acyl-carrier-protein. In Dinoroseobacter shibae (strain DSM 16493 / NCIMB 14021 / DFL 12), this protein is Holo-[acyl-carrier-protein] synthase.